We begin with the raw amino-acid sequence, 189 residues long: Interleukin-23 subunit alpha (189 aa).

A signal peptide spans 1–19 (MLGSTAVMLLLLLPWTAQT).

Belongs to the IL-6 superfamily. In terms of assembly, heterodimer with IL12B; disulfide-linked. The heterodimer is known as interleukin IL-23. Interacts with IL23R; this interaction enables recruitment of IL12RB1.

The protein resides in the secreted. In terms of biological role, associates with IL12B to form the pro-inflammatory cytokine IL-23 that plays different roles in innate and adaptive immunity. Released by antigen-presenting cells such as dendritic cells or macrophages, binds to a heterodimeric receptor complex composed of IL12RB1 and IL23R to activate JAK2 and TYK2 which then phosphorylate the receptor to form a docking site leading to the phosphorylation of STAT3 and STAT4. This process leads to activation of several pathways including p38 MAPK or NF-kappa-B and promotes the production of pro-inflammatory cytokines such as interleukin-17A/IL17A. In turn, participates in the early and effective intracellular bacterial clearance. Promotes the expansion and survival of T-helper 17 cells, a CD4-positive helper T-cell subset that produces IL-17, as well as other IL-17-producing cells. This chain is Interleukin-23 subunit alpha (IL23A), found in Cavia porcellus (Guinea pig).